We begin with the raw amino-acid sequence, 96 residues long: Co-chaperonin GroES (96 aa).

It belongs to the GroES chaperonin family. As to quaternary structure, heptamer of 7 subunits arranged in a ring. Interacts with the chaperonin GroEL.

The protein localises to the cytoplasm. Its function is as follows. Together with the chaperonin GroEL, plays an essential role in assisting protein folding. The GroEL-GroES system forms a nano-cage that allows encapsulation of the non-native substrate proteins and provides a physical environment optimized to promote and accelerate protein folding. GroES binds to the apical surface of the GroEL ring, thereby capping the opening of the GroEL channel. In Haemophilus influenzae (strain PittGG), this protein is Co-chaperonin GroES.